The primary structure comprises 360 residues: C-C chemokine receptor type 4 (360 aa).

Residues 1-39 (MNPTDIADTTLDESIYSNYYLYESIPKPCTKEGIKAFGE) are Extracellular-facing. The helical transmembrane segment at 40-67 (LFLPPLYSLVFVFGLLGNSVVVLVLFKY) threads the bilayer. Over 68 to 77 (KRLRSMTDVY) the chain is Cytoplasmic. The helical transmembrane segment at 78–98 (LLNLAISDLLFVFSLPFWGYY) threads the bilayer. Residues 99–111 (AADQWVFGLGLCK) are Extracellular-facing. Cys110 and Cys187 form a disulfide bridge. A helical membrane pass occupies residues 112-133 (MISWMYLVGFYSGIFFVMLMSI). Over 134 to 150 (DRYLAIVHAVFSLRART) the chain is Cytoplasmic. Residues 151 to 175 (LTYGVITSLATWSVAVFASLPGFLF) form a helical membrane-spanning segment. At 176 to 206 (STCYTERNHTYCKTKYSLNSTTWKVLSSLEI) the chain is on the extracellular side. N-linked (GlcNAc...) asparagine glycosylation is found at Asn183 and Asn194. Residues 207 to 226 (NILGLVIPLGIMLFCYSMII) traverse the membrane as a helical segment. Residues 227–242 (RTLQHCKNEKKNKAVK) lie on the Cytoplasmic side of the membrane. The chain crosses the membrane as a helical span at residues 243–267 (MIFAVVVLFLGFWTPYNIVLFLETL). Topologically, residues 268-284 (VELEVLQDCTFERYLDY) are extracellular. A helical transmembrane segment spans residues 285–308 (AIQATETLAFVHCCLNPIIYFFLG). The Cytoplasmic portion of the chain corresponds to 309 to 360 (EKFRKYILQLFKTCRGLFVLCQYCGLLQIYSADTPSSSYTQSTMDHDLHDAL).

Belongs to the G-protein coupled receptor 1 family. In natural killer cells, CCL22 binding induces phosphorylation on yet undefined Ser/Thr residues, most probably by beta-adrenergic receptor kinases 1 and 2. As to expression, predominantly expressed in the thymus, in peripheral blood leukocytes, including T-cells, mostly CD4+ cells, and basophils, and in platelets; at lower levels, in the spleen and in monocytes. Detected also in macrophages, IL-2-activated natural killer cells and skin-homing memory T-cells, mostly the ones expressing the cutaneous lymphocyte antigen (CLA). Expressed in brain microvascular and coronary artery endothelial cells.

The protein resides in the cell membrane. In terms of biological role, high affinity receptor for the C-C type chemokines CCL17/TARC, CCL22/MDC and CKLF isoform 1/CKLF1. The activity of this receptor is mediated by G(i) proteins which activate a phosphatidylinositol-calcium second messenger system. Can function as a chemoattractant homing receptor on circulating memory lymphocytes and as a coreceptor for some primary HIV-2 isolates. In the CNS, could mediate hippocampal-neuron survival. The protein is C-C chemokine receptor type 4 (CCR4) of Homo sapiens (Human).